The following is a 440-amino-acid chain: GTPase Obg (440 aa).

The 159-residue stretch at 5–163 (STFVDQTKIE…RTLRLELKVL (159 aa)) folds into the Obg domain. The region spanning 164–338 (ADVGLVGFPS…LMSRAADLVS (175 aa)) is the OBG-type G domain. GTP is bound by residues 170-177 (GFPSVGKS), 195-199 (FTTLK), 217-220 (DLPG), 288-291 (SQMD), and 319-321 (SSV). 2 residues coordinate Mg(2+): Ser177 and Thr197. An OCT domain is found at 362 to 440 (YHRPEKMEFT…IGDFSFEFVQ (79 aa)).

It belongs to the TRAFAC class OBG-HflX-like GTPase superfamily. OBG GTPase family. In terms of assembly, monomer. Requires Mg(2+) as cofactor.

It is found in the cytoplasm. Functionally, an essential GTPase which binds GTP, GDP and possibly (p)ppGpp with moderate affinity, with high nucleotide exchange rates and a fairly low GTP hydrolysis rate. Plays a role in control of the cell cycle, stress response, ribosome biogenesis and in those bacteria that undergo differentiation, in morphogenesis control. This Lactobacillus delbrueckii subsp. bulgaricus (strain ATCC 11842 / DSM 20081 / BCRC 10696 / JCM 1002 / NBRC 13953 / NCIMB 11778 / NCTC 12712 / WDCM 00102 / Lb 14) protein is GTPase Obg.